A 754-amino-acid polypeptide reads, in one-letter code: 5-methyltetrahydropteroyltriglutamate--homocysteine methyltransferase (754 aa).

Residues 17–20 (RELK) and K117 contribute to the 5-methyltetrahydropteroyltri-L-glutamate site. Residues 431–433 (IGS) and E484 contribute to the L-homocysteine site. L-methionine contacts are provided by residues 431–433 (IGS) and E484. 5-methyltetrahydropteroyltri-L-glutamate-binding positions include 515–516 (RC) and W561. An L-homocysteine-binding site is contributed by D599. D599 contacts L-methionine. E605 contributes to the 5-methyltetrahydropteroyltri-L-glutamate binding site. Zn(2+)-binding residues include H641, C643, and E665. Catalysis depends on H694, which acts as the Proton donor. C726 contacts Zn(2+).

Belongs to the vitamin-B12 independent methionine synthase family. Requires Zn(2+) as cofactor.

The enzyme catalyses 5-methyltetrahydropteroyltri-L-glutamate + L-homocysteine = tetrahydropteroyltri-L-glutamate + L-methionine. It participates in amino-acid biosynthesis; L-methionine biosynthesis via de novo pathway; L-methionine from L-homocysteine (MetE route): step 1/1. Catalyzes the transfer of a methyl group from 5-methyltetrahydrofolate to homocysteine resulting in methionine formation. This chain is 5-methyltetrahydropteroyltriglutamate--homocysteine methyltransferase, found in Salmonella newport (strain SL254).